Here is a 122-residue protein sequence, read N- to C-terminus: Small ribosomal subunit protein uS13 (122 aa).

Positions 97 to 122 (PCRGQRTKTNARTRKGPARTVAGKKK) are disordered.

It belongs to the universal ribosomal protein uS13 family. Part of the 30S ribosomal subunit. Forms a loose heterodimer with protein S19. Forms two bridges to the 50S subunit in the 70S ribosome.

In terms of biological role, located at the top of the head of the 30S subunit, it contacts several helices of the 16S rRNA. In the 70S ribosome it contacts the 23S rRNA (bridge B1a) and protein L5 of the 50S subunit (bridge B1b), connecting the 2 subunits; these bridges are implicated in subunit movement. Contacts the tRNAs in the A and P-sites. This is Small ribosomal subunit protein uS13 from Geobacter sp. (strain M21).